Consider the following 175-residue polypeptide: ATP synthase subunit b (175 aa).

Residues 19–39 (LVVGTIAFALLVFVLLKFVMP) traverse the membrane as a helical segment.

This sequence belongs to the ATPase B chain family. In terms of assembly, F-type ATPases have 2 components, F(1) - the catalytic core - and F(0) - the membrane proton channel. F(1) has five subunits: alpha(3), beta(3), gamma(1), delta(1), epsilon(1). F(0) has three main subunits: a(1), b(2) and c(10-14). The alpha and beta chains form an alternating ring which encloses part of the gamma chain. F(1) is attached to F(0) by a central stalk formed by the gamma and epsilon chains, while a peripheral stalk is formed by the delta and b chains.

The protein localises to the cell membrane. F(1)F(0) ATP synthase produces ATP from ADP in the presence of a proton or sodium gradient. F-type ATPases consist of two structural domains, F(1) containing the extramembraneous catalytic core and F(0) containing the membrane proton channel, linked together by a central stalk and a peripheral stalk. During catalysis, ATP synthesis in the catalytic domain of F(1) is coupled via a rotary mechanism of the central stalk subunits to proton translocation. Functionally, component of the F(0) channel, it forms part of the peripheral stalk, linking F(1) to F(0). The protein is ATP synthase subunit b of Salinispora tropica (strain ATCC BAA-916 / DSM 44818 / JCM 13857 / NBRC 105044 / CNB-440).